A 130-amino-acid polypeptide reads, in one-letter code: MEEITDGVNNMNLATDSQKKNRIQVSNTKKPLFFYVNLAKRYMQQYNDVELSALGMAIATVVTVTEILKNNGFAVEKKIMTSTVDIKDDARGRPVQKAKIEITLVKSEKFDELMAAANEEKEDAEAQVQN.

Methionine 1 is subject to N-acetylmethionine.

As to quaternary structure, homotetramer.

This is an uncharacterized protein from Arabidopsis thaliana (Mouse-ear cress).